The sequence spans 293 residues: ATP synthase gamma chain (293 aa).

This sequence belongs to the ATPase gamma chain family. As to quaternary structure, F-type ATPases have 2 components, CF(1) - the catalytic core - and CF(0) - the membrane proton channel. CF(1) has five subunits: alpha(3), beta(3), gamma(1), delta(1), epsilon(1). CF(0) has three main subunits: a, b and c.

The protein localises to the cell inner membrane. Its function is as follows. Produces ATP from ADP in the presence of a proton gradient across the membrane. The gamma chain is believed to be important in regulating ATPase activity and the flow of protons through the CF(0) complex. In Chlorobium chlorochromatii (strain CaD3), this protein is ATP synthase gamma chain.